Consider the following 1441-residue polypeptide: Probable ubiquitin-conjugating enzyme E2 R521 (1441 aa).

The helical transmembrane segment at 20 to 40 (YIHHIIINYITNSILYFFLIM) threads the bilayer. Residues 63–89 (NQSKLVNTLDIIKDEINKWEEKNTDKD) adopt a coiled-coil conformation. Positions 180-199 (VSKDKMKDKSESNSEHEQES) are enriched in basic and acidic residues. Disordered regions lie at residues 180–207 (VSKD…SNEI) and 283–305 (IFGK…MSKV). The segment covering 286-303 (KSKNSGPSSSKTSISSMS) has biased composition (low complexity). Residues 340-368 (TTNEDNNDLDNLINEVERLVQETKDQETK) are a coiled coil. Low complexity predominate over residues 505–538 (TVEPVQEVAEEPVQQEVAEEPVQQEVAEEPVQQE). Disordered stretches follow at residues 505–554 (TVEP…PVQK) and 577–605 (NDFS…NNLG). Residues 539–549 (VAEEPVQEVAE) are compositionally biased toward acidic residues. The 164-residue stretch at 1217–1380 (AISRELLSHS…VRFNCMKWAM (164 aa)) folds into the UBC core domain. Cys-1306 functions as the Glycyl thioester intermediate in the catalytic mechanism.

This sequence belongs to the ubiquitin-conjugating enzyme family.

Its subcellular location is the membrane. It catalyses the reaction S-ubiquitinyl-[E1 ubiquitin-activating enzyme]-L-cysteine + [E2 ubiquitin-conjugating enzyme]-L-cysteine = [E1 ubiquitin-activating enzyme]-L-cysteine + S-ubiquitinyl-[E2 ubiquitin-conjugating enzyme]-L-cysteine.. It functions in the pathway protein modification; protein ubiquitination. Its function is as follows. Catalyzes the covalent attachment of ubiquitin to other proteins. This Acanthamoeba polyphaga (Amoeba) protein is Probable ubiquitin-conjugating enzyme E2 R521.